The chain runs to 429 residues: CinA-like protein (429 aa).

This sequence belongs to the CinA family.

The chain is CinA-like protein from Prochlorococcus marinus (strain MIT 9313).